Reading from the N-terminus, the 363-residue chain is Spermatogenesis-associated protein 22 (363 aa).

Composition is skewed to polar residues over residues 1–12, 30–48, 98–108, and 140–157; these read MKRSLNENSARS, QPLTSNPLKDDSGISTPSD, IQSNTGRSQGG, and NDGKNSCPVSSGAQQQKQ. Disordered regions lie at residues 1 to 51, 98 to 127, and 140 to 170; these read MKRS…DNYD, IQSNTGRSQGGWSYRDGNKNTSLKTWNKND, and NDGKNSCPVSSGAQQQKQLRIPEPPNLSRNK.

Component of a multiprotein complex with MEIOB and RPA2. Interacts with MEIOB. Interacts with the complex BRME1:HSF2BP:BRCA2. Highly expressed in adult testis.

The protein resides in the chromosome. In terms of biological role, meiosis-specific protein required for homologous recombination in meiosis I. The polypeptide is Spermatogenesis-associated protein 22 (Homo sapiens (Human)).